Consider the following 310-residue polypeptide: MGIVIGIICAFIIIVQFIIGNVANGFIALVNIIDWVKRRKISLVDQIITALAISRIDMLCSTFLIVLITSLYPDLNTAVNMVKISNNIWIVANHFSIWLATSLSIFYFLKIANFSNYVFLCLRWRLSKVVSVTLLLSLVLLLMNILIMNMHIDTWSDGFKRNVSFGFRSKNCTRFFKLALLINTTFTCVPFTVSMVAFLLLIFSLWRHLKNMQYHAKGSRDPSTAVHIKALQMVVVFVLFYTFFFLSLAIQLWTSESLEKNNLFYVTLIITFPSVHSCMLILRNSKLRQASLLVLWWLLCRSKDIQTLVP.

Topologically, residues 1 to 2 (MG) are extracellular. The helical transmembrane segment at 3-23 (IVIGIICAFIIIVQFIIGNVA) threads the bilayer. Residues 24-46 (NGFIALVNIIDWVKRRKISLVDQ) lie on the Cytoplasmic side of the membrane. Residues 47–67 (IITALAISRIDMLCSTFLIVL) form a helical membrane-spanning segment. The Extracellular segment spans residues 68-87 (ITSLYPDLNTAVNMVKISNN). A helical transmembrane segment spans residues 88 to 108 (IWIVANHFSIWLATSLSIFYF). At 109–128 (LKIANFSNYVFLCLRWRLSK) the chain is on the cytoplasmic side. The helical transmembrane segment at 129 to 149 (VVSVTLLLSLVLLLMNILIMN) threads the bilayer. Residues 150–185 (MHIDTWSDGFKRNVSFGFRSKNCTRFFKLALLINTT) are Extracellular-facing. N-linked (GlcNAc...) asparagine glycans are attached at residues N162, N171, and N183. The chain crosses the membrane as a helical span at residues 186-206 (FTCVPFTVSMVAFLLLIFSLW). The Cytoplasmic portion of the chain corresponds to 207–232 (RHLKNMQYHAKGSRDPSTAVHIKALQ). A helical transmembrane segment spans residues 233–253 (MVVVFVLFYTFFFLSLAIQLW). Over 254-261 (TSESLEKN) the chain is Extracellular. A helical membrane pass occupies residues 262–282 (NLFYVTLIITFPSVHSCMLIL). Residues 283 to 310 (RNSKLRQASLLVLWWLLCRSKDIQTLVP) lie on the Cytoplasmic side of the membrane.

Belongs to the G-protein coupled receptor T2R family.

Its subcellular location is the membrane. Functionally, putative taste receptor which may play a role in the perception of bitterness. In Rattus norvegicus (Rat), this protein is Taste receptor type 2 member 125.